The following is a 151-amino-acid chain: MTNDIKEIQTIQPGLSEIKEIKGELANVKKRKRRSKKINKLTDGQIRINHVSSEKKRRELERAIFDELVAVVPDLQPQESRSELIIYLKSLSYLSWLYERNEKLRKQIIAKHEAKTGSSSSSDPVQEQNGNIRDLVPKELIWELGDGQSGQ.

Residues 45 to 97 (QIRINHVSSEKKRRELERAIFDELVAVVPDLQPQESRSELIIYLKSLSYLSWL) form the bHLH domain. The disordered stretch occupies residues 112-137 (HEAKTGSSSSSDPVQEQNGNIRDLVP). Over residues 116–131 (TGSSSSSDPVQEQNGN) the composition is skewed to polar residues.

Efficient DNA binding requires dimerization with another bHLH protein.

It is found in the nucleus. Its function is as follows. Transcriptional activator of phospholipid synthetic genes (such as INO1, CHO1/PSS, CHO2/PEM1, OPI3/PEM2, etc.). This Saccharomyces cerevisiae (strain ATCC 204508 / S288c) (Baker's yeast) protein is Protein INO4 (INO4).